The sequence spans 930 residues: Zn(2)-C6 fungal-type transcription factor FTF1c (930 aa).

Positions 137–164 (CIACRRKKIRCSGEKPACEHCLCSYIPC) form a DNA-binding region, zn(2)-C6 fungal-type.

Its subcellular location is the nucleus. Its function is as follows. Zn(2)-C6 fungal-type transcription factor that has a role in the establishment of the fungus within the plant and/or the progress of the disease. Regulates the expression of virulence factors such as SIX1 and SIX6. This chain is Zn(2)-C6 fungal-type transcription factor FTF1c, found in Fusarium oxysporum f. sp. lycopersici (strain 4287 / CBS 123668 / FGSC 9935 / NRRL 34936) (Fusarium vascular wilt of tomato).